The primary structure comprises 835 residues: Protein translocase subunit SecA (835 aa).

Residues Gln-85, Gly-103–Thr-107, and Asp-495 contribute to the ATP site. The interval Lys-806–Asn-835 is disordered. Residues Lys-820–Asn-835 show a composition bias toward basic residues.

It belongs to the SecA family. As to quaternary structure, monomer and homodimer. Part of the essential Sec protein translocation apparatus which comprises SecA, SecYEG and auxiliary proteins SecDF. Other proteins may also be involved.

It localises to the cell membrane. It is found in the cytoplasm. The enzyme catalyses ATP + H2O + cellular proteinSide 1 = ADP + phosphate + cellular proteinSide 2.. Its function is as follows. Part of the Sec protein translocase complex. Interacts with the SecYEG preprotein conducting channel. Has a central role in coupling the hydrolysis of ATP to the transfer of proteins into and across the cell membrane, serving as an ATP-driven molecular motor driving the stepwise translocation of polypeptide chains across the membrane. The sequence is that of Protein translocase subunit SecA from Onion yellows phytoplasma (strain OY-M).